We begin with the raw amino-acid sequence, 285 residues long: Probable endonuclease 4 (285 aa).

Zn(2+)-binding residues include His69, His109, Glu145, Asp179, His182, His216, Asp229, His231, and Glu261.

It belongs to the AP endonuclease 2 family. It depends on Zn(2+) as a cofactor.

It carries out the reaction Endonucleolytic cleavage to 5'-phosphooligonucleotide end-products.. Functionally, endonuclease IV plays a role in DNA repair. It cleaves phosphodiester bonds at apurinic or apyrimidinic (AP) sites, generating a 3'-hydroxyl group and a 5'-terminal sugar phosphate. The sequence is that of Probable endonuclease 4 from Salmonella schwarzengrund (strain CVM19633).